A 358-amino-acid polypeptide reads, in one-letter code: Phosphate acyltransferase (358 aa).

Residues 336–358 are disordered; sequence SAAGAAPASPETAPTPHPSTRAA.

Belongs to the PlsX family. As to quaternary structure, homodimer. Probably interacts with PlsY.

It is found in the cytoplasm. The enzyme catalyses a fatty acyl-[ACP] + phosphate = an acyl phosphate + holo-[ACP]. The protein operates within lipid metabolism; phospholipid metabolism. Catalyzes the reversible formation of acyl-phosphate (acyl-PO(4)) from acyl-[acyl-carrier-protein] (acyl-ACP). This enzyme utilizes acyl-ACP as fatty acyl donor, but not acyl-CoA. The chain is Phosphate acyltransferase from Cupriavidus pinatubonensis (strain JMP 134 / LMG 1197) (Cupriavidus necator (strain JMP 134)).